A 77-amino-acid chain; its full sequence is NAD(P)H-quinone oxidoreductase subunit L (77 aa).

Helical transmembrane passes span 12 to 32 (LIAYIGIISTYLLVIPLLLFY) and 47 to 67 (LGIYGLVFLFFPGLILFSPFL).

It belongs to the complex I NdhL subunit family. NDH-1 can be composed of about 15 different subunits; different subcomplexes with different compositions have been identified which probably have different functions.

The protein resides in the cellular thylakoid membrane. The enzyme catalyses a plastoquinone + NADH + (n+1) H(+)(in) = a plastoquinol + NAD(+) + n H(+)(out). The catalysed reaction is a plastoquinone + NADPH + (n+1) H(+)(in) = a plastoquinol + NADP(+) + n H(+)(out). In terms of biological role, NDH-1 shuttles electrons from an unknown electron donor, via FMN and iron-sulfur (Fe-S) centers, to quinones in the respiratory and/or the photosynthetic chain. The immediate electron acceptor for the enzyme in this species is believed to be plastoquinone. Couples the redox reaction to proton translocation, and thus conserves the redox energy in a proton gradient. Cyanobacterial NDH-1 also plays a role in inorganic carbon-concentration. In Prochlorococcus marinus (strain MIT 9301), this protein is NAD(P)H-quinone oxidoreductase subunit L.